The chain runs to 277 residues: Zinc finger protein 511 (277 aa).

C2H2-type zinc fingers lie at residues 96–121 (FRCH…NALH), 123–146 (NVCS…LEWH), and 160–185 (YECL…IRTH). A disordered region spans residues 225–244 (ESSESMDFSLTPEPVETEPM).

The protein belongs to the krueppel C2H2-type zinc-finger protein family.

The protein localises to the nucleus. In terms of biological role, may be involved in transcriptional regulation. This chain is Zinc finger protein 511 (znf511), found in Danio rerio (Zebrafish).